A 275-amino-acid chain; its full sequence is 3-methyl-2-oxobutanoate hydroxymethyltransferase (275 aa).

Mg(2+) contacts are provided by D44 and D83. Residues 44–45, D83, and K113 each bind 3-methyl-2-oxobutanoate; that span reads DS. E115 is a binding site for Mg(2+). E182 acts as the Proton acceptor in catalysis.

The protein belongs to the PanB family. As to quaternary structure, homodecamer; pentamer of dimers. The cofactor is Mg(2+).

The protein localises to the cytoplasm. The catalysed reaction is 3-methyl-2-oxobutanoate + (6R)-5,10-methylene-5,6,7,8-tetrahydrofolate + H2O = 2-dehydropantoate + (6S)-5,6,7,8-tetrahydrofolate. It functions in the pathway cofactor biosynthesis; (R)-pantothenate biosynthesis; (R)-pantoate from 3-methyl-2-oxobutanoate: step 1/2. Catalyzes the reversible reaction in which hydroxymethyl group from 5,10-methylenetetrahydrofolate is transferred onto alpha-ketoisovalerate to form ketopantoate. In Clostridioides difficile (strain 630) (Peptoclostridium difficile), this protein is 3-methyl-2-oxobutanoate hydroxymethyltransferase.